The chain runs to 276 residues: MHPAAEHSPLGKSSEYIATYTPSLLFPISRAAKWAELGLTAQTLPYQGVDFWNCYELSWLLPSGKPVVAIAEFSIPADSPNIIESKSFKLYLNSLNQTAFATVEQVQTTLEQDLSTAAGKPVGVRIRSLSDIEGEGVATLPGVCIDDLDITVSSYDRPQPELLCCDESQIIEESVHSHLLKSNCPVTSQPDWGSVVVEYRGAALDHSSLLAYIVSFRQHSDFHEQCVERIFLDLQRLLKPEKLTVYARYVRRGGLDINPYRSTETLDVNNRRLARQ.

83–85 (IES) is a binding site for substrate. An NADPH-binding site is contributed by 85 to 86 (SK). Cys-184 functions as the Thioimide intermediate in the catalytic mechanism. Asp-191 acts as the Proton donor in catalysis. 223–224 (HE) is a substrate binding site. Residue 252–253 (RG) coordinates NADPH.

This sequence belongs to the GTP cyclohydrolase I family. QueF type 2 subfamily. In terms of assembly, homodimer.

Its subcellular location is the cytoplasm. The enzyme catalyses 7-aminomethyl-7-carbaguanine + 2 NADP(+) = 7-cyano-7-deazaguanine + 2 NADPH + 3 H(+). Its pathway is tRNA modification; tRNA-queuosine biosynthesis. Catalyzes the NADPH-dependent reduction of 7-cyano-7-deazaguanine (preQ0) to 7-aminomethyl-7-deazaguanine (preQ1). The protein is NADPH-dependent 7-cyano-7-deazaguanine reductase of Pseudomonas savastanoi pv. phaseolicola (strain 1448A / Race 6) (Pseudomonas syringae pv. phaseolicola (strain 1448A / Race 6)).